The sequence spans 601 residues: Probable inactive receptor kinase At1g27190 (601 aa).

The N-terminal stretch at 1 to 24 (MKKIFITLLWLLFISSFLCSSSSA) is a signal peptide. Asn52 carries an N-linked (GlcNAc...) asparagine glycan. 5 LRR repeats span residues 73–95 (RIISLQLQSMQLAGEIPESLKLC), 97–119 (SLQSLDLSGNDLSGSIPSQICSW), 122–144 (YLVTLDLSGNKLGGSIPTQIVEC), 146–169 (FLNALILSDNKLSGSIPSQLSRLD), and 170–192 (RLRRLSLAGNDLSGTIPSELARF). The helical transmembrane segment at 221-241 (IIIVAGVLGAVGSLCVGLVIF) threads the bilayer. At Thr298 the chain carries Phosphothreonine. The Protein kinase domain occupies 301-586 (FSSGNIDVSS…KNMADKHGVS (286 aa)). Residues 307-315 (DVSSRTGVS) and Lys329 each bind ATP. Ser383 carries the phosphoserine modification. At Thr399 the chain carries Phosphothreonine. Tyr476 bears the Phosphotyrosine mark. At Ser478 the chain carries Phosphoserine. Thr479 is subject to Phosphothreonine. 2 positions are modified to phosphoserine: Ser483 and Ser586.

It belongs to the protein kinase superfamily. Ser/Thr protein kinase family.

It localises to the membrane. This chain is Probable inactive receptor kinase At1g27190, found in Arabidopsis thaliana (Mouse-ear cress).